The sequence spans 437 residues: Phosphomethylpyrimidine synthase (437 aa).

Residues Asn69, Met98, Tyr127, His163, 185–187, 226–229, and Glu265 each bind substrate; these read SRG and DACR. His269 serves as a coordination point for Zn(2+). Tyr292 is a binding site for substrate. His333 is a binding site for Zn(2+). [4Fe-4S] cluster-binding residues include Cys409, Cys412, and Cys416.

This sequence belongs to the ThiC family. It depends on [4Fe-4S] cluster as a cofactor.

The enzyme catalyses 5-amino-1-(5-phospho-beta-D-ribosyl)imidazole + S-adenosyl-L-methionine = 4-amino-2-methyl-5-(phosphooxymethyl)pyrimidine + CO + 5'-deoxyadenosine + formate + L-methionine + 3 H(+). The protein operates within cofactor biosynthesis; thiamine diphosphate biosynthesis. Its function is as follows. Catalyzes the synthesis of the hydroxymethylpyrimidine phosphate (HMP-P) moiety of thiamine from aminoimidazole ribotide (AIR) in a radical S-adenosyl-L-methionine (SAM)-dependent reaction. The polypeptide is Phosphomethylpyrimidine synthase (Clostridium botulinum (strain Okra / Type B1)).